Reading from the N-terminus, the 121-residue chain is Autophagy-related protein 8f (121 aa).

Residue Gly117 is the site of Phosphatidylethanolamine amidated glycine attachment. The propeptide at 118-121 (FGSP) is removed in mature form.

The protein belongs to the ATG8 family. As to quaternary structure, interacts with ATG4. Interacts with NBR1. Interacts with ATI1 and ATI2. Interacts with SH3P2. In terms of processing, the C-terminal 4 residues are removed by ATG4 to expose Gly-117 at the C-terminus. This Gly-117 forms then a thioester bond with the 'Cys-558' of ATG7 (E1-like activating enzyme) before being transferred to the 'Cys-258' of ATG3 (the specific E2 conjugating enzyme), in order to be finally amidated with phosphatidylethanolamine. This lipid modification anchors ATG8 to autophagosomes. Constitutively expressed.

Its subcellular location is the cytoplasmic vesicle. It localises to the autophagosome membrane. The protein resides in the vacuole membrane. The protein localises to the cytoplasm. It is found in the cytoskeleton. Functionally, ubiquitin-like modifier involved in autophagosomes formation. May mediate the delivery of the autophagosomes to the vacuole via the microtubule cytoskeleton. This chain is Autophagy-related protein 8f (ATG8F), found in Arabidopsis thaliana (Mouse-ear cress).